The primary structure comprises 244 residues: 15,16-dihydrobiliverdin:ferredoxin oxidoreductase (244 aa).

This sequence belongs to the HY2 family.

The catalysed reaction is 15,16-dihydrobiliverdin + oxidized 2[4Fe-4S]-[ferredoxin] = biliverdin IXalpha + reduced 2[4Fe-4S]-[ferredoxin] + 2 H(+). Its function is as follows. Catalyzes the two-electron reduction of biliverdin IX-alpha at the C15 methine bridge. This chain is 15,16-dihydrobiliverdin:ferredoxin oxidoreductase (pebA), found in Gloeobacter violaceus (strain ATCC 29082 / PCC 7421).